A 346-amino-acid chain; its full sequence is Sensor protein kinase GraS (346 aa).

2 helical membrane passes run 15–35 (MNWI…SLID) and 43–63 (LFYI…LTYF). In terms of domain architecture, Histidine kinase spans 126-332 (EFVHDIKTPV…TVRLIFPLQN (207 aa)).

In terms of assembly, interacts with GraX.

It localises to the cell membrane. It carries out the reaction ATP + protein L-histidine = ADP + protein N-phospho-L-histidine.. In terms of biological role, member of the two-component regulatory system GraR/GraS involved in resistance against cationic antimicrobial peptides (CAMPs). Functions as a sensor protein kinase which phosphorylates GraR through the auxiliary protein GraX. In turn, GraR up-regulates many genes such as adhesins, exoproteins, transporters, toxins, and proteins involved in cell wall synthesis. Down-regulates the expression of many genes involved in RNA and amino acid synthesis or glycolysis. The protein is Sensor protein kinase GraS (graS) of Staphylococcus aureus (strain MSSA476).